A 330-amino-acid polypeptide reads, in one-letter code: Putative protein N-methyltransferase FAM86B1 (330 aa).

S-adenosyl-L-methionine contacts are provided by residues W139, 165–167 (GSG), W228, and A247.

Belongs to the class I-like SAM-binding methyltransferase superfamily. EEF2KMT family.

The sequence is that of Putative protein N-methyltransferase FAM86B1 from Homo sapiens (Human).